A 308-amino-acid chain; its full sequence is N-acetylmuramic acid 6-phosphate etherase (308 aa).

An SIS domain is found at 63–226 (IVDAFACGGR…STASMIRSGK (164 aa)). Glu91 serves as the catalytic Proton donor. The active site involves Glu122.

This sequence belongs to the GCKR-like family. MurNAc-6-P etherase subfamily. In terms of assembly, homodimer.

The enzyme catalyses N-acetyl-D-muramate 6-phosphate + H2O = N-acetyl-D-glucosamine 6-phosphate + (R)-lactate. It participates in amino-sugar metabolism; 1,6-anhydro-N-acetylmuramate degradation. It functions in the pathway amino-sugar metabolism; N-acetylmuramate degradation. Its pathway is cell wall biogenesis; peptidoglycan recycling. In terms of biological role, specifically catalyzes the cleavage of the D-lactyl ether substituent of MurNAc 6-phosphate, producing GlcNAc 6-phosphate and D-lactate. Together with AnmK, is also required for the utilization of anhydro-N-acetylmuramic acid (anhMurNAc) either imported from the medium or derived from its own cell wall murein, and thus plays a role in cell wall recycling. The sequence is that of N-acetylmuramic acid 6-phosphate etherase from Colwellia psychrerythraea (strain 34H / ATCC BAA-681) (Vibrio psychroerythus).